A 106-amino-acid polypeptide reads, in one-letter code: U1-lycotoxin-Ls1b (106 aa).

Residues 1-19 (MKVLVVVALLVTLISYSSS) form the signal peptide. A propeptide spanning residues 20–40 (EGIDDLEADELLSLMANEQTR) is cleaved from the precursor. Cystine bridges form between Cys-43–Cys-58, Cys-50–Cys-67, Cys-57–Cys-85, and Cys-69–Cys-83.

The protein belongs to the neurotoxin 19 (CSTX) family. 04 (U1-Lctx) subfamily. As to expression, expressed by the venom gland.

It is found in the secreted. This Lycosa singoriensis (Wolf spider) protein is U1-lycotoxin-Ls1b.